The primary structure comprises 114 residues: Fructose-bisphosphate aldolase 2 (114 aa).

Position 35–38 (35–38) interacts with dihydroxyacetone phosphate; sequence NIDT.

Belongs to the class II fructose-bisphosphate aldolase family. In terms of assembly, homodimer. Zn(2+) is required as a cofactor.

The catalysed reaction is beta-D-fructose 1,6-bisphosphate = D-glyceraldehyde 3-phosphate + dihydroxyacetone phosphate. It functions in the pathway carbohydrate biosynthesis; Calvin cycle. It participates in carbohydrate degradation; glycolysis; D-glyceraldehyde 3-phosphate and glycerone phosphate from D-glucose: step 4/4. In terms of biological role, catalyzes the aldol condensation of dihydroxyacetone phosphate (DHAP or glycerone-phosphate) with glyceraldehyde 3-phosphate (G3P) to form fructose 1,6-bisphosphate (FBP) in gluconeogenesis and the reverse reaction in glycolysis. This is Fructose-bisphosphate aldolase 2 (cbbA) from Rhodobacter capsulatus (Rhodopseudomonas capsulata).